The sequence spans 934 residues: Intimin (934 aa).

The signal sequence occupies residues Met-1 to Ala-39. The interval Asn-40–Thr-153 is peptidoglycan-binding. Residues Asn-40 to Thr-153 are sufficient for homodimerization. Residues Asn-40–Thr-212 are required for periplasmic localization. A LysM domain is found at Leu-63 to Leu-112. The tract at residues Tyr-210–Phe-411 is inverse autotransporter. Positions Leu-402–Phe-411 are signature sequence for beta-barrel assembly machinery (BAM), which recognizes the unfolded beta-barrel in the periplasm. Positions Leu-437 to Lys-449 are minimum linker residues necessary for formation of a heat-modifiable beta-barrel. Big-1 domains follow at residues Val-560–Phe-653 and Ile-660–Phe-753. An intimin receptor Tir-binding region spans residues Ala-747–Glu-934. Residues Ala-787–Ser-833 enclose the BIG2 domain. Cys-858 and Cys-932 are oxidised to a cystine.

Belongs to the intimin/invasin family. As to quaternary structure, homodimer. Interacts with Tir.

Its subcellular location is the cell outer membrane. An inverse autotransporter. Adhesin, which mediates attachment to the human intestine epithelial cells. Necessary for the production of attaching and effacing lesions on infected human tissue culture cells. Anchored to the outer membrane by binding to peptidoglycan (PGN) via its periplasmic domain, thus helping in receptor interactions during host invasion. PGN-binding may also aid in resisting mechanical and chemical stress during transit of the bacterium through the gastrointestinal tract of the host. The sequence is that of Intimin from Escherichia coli O157:H7.